We begin with the raw amino-acid sequence, 239 residues long: Uridylate kinase (239 aa).

10-13 is a binding site for ATP; that stretch reads KFSG. Positions 18–23 are involved in allosteric activation by GTP; the sequence is GENGFG. A UMP-binding site is contributed by Gly-52. Gly-53 and Arg-57 together coordinate ATP. Residues Asp-73 and 134–141 each bind UMP; that span reads TGNPYFTT. 3 residues coordinate ATP: Thr-161, Tyr-167, and Asp-170.

This sequence belongs to the UMP kinase family. Homohexamer.

It localises to the cytoplasm. The enzyme catalyses UMP + ATP = UDP + ADP. Its pathway is pyrimidine metabolism; CTP biosynthesis via de novo pathway; UDP from UMP (UMPK route): step 1/1. Its activity is regulated as follows. Allosterically activated by GTP. Inhibited by UTP. Functionally, catalyzes the reversible phosphorylation of UMP to UDP. The protein is Uridylate kinase of Campylobacter jejuni subsp. jejuni serotype O:2 (strain ATCC 700819 / NCTC 11168).